The primary structure comprises 154 residues: Protein X (154 aa).

A mitochondrial targeting sequence region spans residues proline 68–phenylalanine 117.

The protein belongs to the orthohepadnavirus protein X family. May form homodimer. May interact with host CEBPA, CFLAR, CREB1, DDB1, E4F1, HBXIP, HSPD1/HSP60, NFKBIA, POLR2E and SMAD4. Interacts with host SMC5-SMC6 complex and induces its degradation. Interacts with host TRPC4AP; leading to prevent ubiquitination of TRPC4AP. Interacts with host PLSCR1; this interaction promotes ubiquitination and degradation of HBx and impairs HBx-mediated cell proliferation. A fraction may be phosphorylated in insect cells and HepG2 cells, a human hepatoblastoma cell line. Phosphorylated in vitro by host protein kinase C or mitogen-activated protein kinase. N-acetylated in insect cells.

The protein resides in the host cytoplasm. It is found in the host nucleus. Its subcellular location is the host mitochondrion. Functionally, multifunctional protein that plays a role in silencing host antiviral defenses and promoting viral transcription. Does not seem to be essential for HBV infection. May be directly involved in development of cirrhosis and liver cancer (hepatocellular carcinoma). Most of cytosolic activities involve modulation of cytosolic calcium. The effect on apoptosis is controversial depending on the cell types in which the studies have been conducted. May induce apoptosis by localizing in mitochondria and causing loss of mitochondrial membrane potential. May also modulate apoptosis by binding host CFLAR, a key regulator of the death-inducing signaling complex (DISC). Promotes viral transcription by using the host E3 ubiquitin ligase DDB1 to target the SMC5-SMC6 complex to proteasomal degradation. This host complex would otherwise bind to viral episomal DNA, and prevents its transcription. Moderately stimulates transcription of many different viral and cellular transcription elements. Promoters and enhancers stimulated by HBx contain DNA binding sites for NF-kappa-B, AP-1, AP-2, c-EBP, ATF/CREB, or the calcium-activated factor NF-AT. The sequence is that of Protein X from Hepatitis B virus genotype H subtype adw4 (isolate Nicaragua/2928Nic/1997) (HBV-H).